Consider the following 869-residue polypeptide: Alanine--tRNA ligase (869 aa).

Positions 559, 563, 660, and 664 each coordinate Zn(2+).

The protein belongs to the class-II aminoacyl-tRNA synthetase family. Requires Zn(2+) as cofactor.

It localises to the cytoplasm. The enzyme catalyses tRNA(Ala) + L-alanine + ATP = L-alanyl-tRNA(Ala) + AMP + diphosphate. In terms of biological role, catalyzes the attachment of alanine to tRNA(Ala) in a two-step reaction: alanine is first activated by ATP to form Ala-AMP and then transferred to the acceptor end of tRNA(Ala). Also edits incorrectly charged Ser-tRNA(Ala) and Gly-tRNA(Ala) via its editing domain. This Herminiimonas arsenicoxydans protein is Alanine--tRNA ligase.